An 88-amino-acid chain; its full sequence is Potassium channel toxin MeuTXKbeta3-meucin-24 (88 aa).

Residues 1 to 22 form the signal peptide; the sequence is MMKQQFFLFLAVIVMISSVIEA. The BetaSPN-type CS-alpha/beta domain maps to 55-88; the sequence is EYACPVIEKWCEDHCQAKNAIGRCENTECKCLSK. 3 disulfides stabilise this stretch: cysteine 58–cysteine 78, cysteine 65–cysteine 83, and cysteine 69–cysteine 85.

Belongs to the long chain scorpion toxin family. Class 2 subfamily. Expressed by the venom gland.

Its subcellular location is the secreted. Its function is as follows. Inhibits voltage-gated potassium channels. In terms of biological role, the synthetic meucin-24 inhibits the development of P.berghei ookinetes, kills intraerythrocytic P.falciparum, and is cytotoxic to the Drosophila S2 cells at micromolar concentrations. No antibacterial, antifungal and hemolytic activities have been found at micromolar concentrations. The sequence is that of Potassium channel toxin MeuTXKbeta3-meucin-24 from Mesobuthus eupeus (Lesser Asian scorpion).